Here is a 366-residue protein sequence, read N- to C-terminus: 3-dehydroquinate synthase (366 aa).

Residues Ser74 to Lys79, Gly108 to Asp112, Thr132 to Thr133, Lys144, Lys153, and Phe171 to Thr174 contribute to the NAD(+) site. Residues Glu186, His249, and His266 each contribute to the Zn(2+) site.

The protein belongs to the sugar phosphate cyclases superfamily. Dehydroquinate synthase family. The cofactor is Co(2+). It depends on Zn(2+) as a cofactor. NAD(+) serves as cofactor.

It is found in the cytoplasm. The catalysed reaction is 7-phospho-2-dehydro-3-deoxy-D-arabino-heptonate = 3-dehydroquinate + phosphate. It participates in metabolic intermediate biosynthesis; chorismate biosynthesis; chorismate from D-erythrose 4-phosphate and phosphoenolpyruvate: step 2/7. Its function is as follows. Catalyzes the conversion of 3-deoxy-D-arabino-heptulosonate 7-phosphate (DAHP) to dehydroquinate (DHQ). The sequence is that of 3-dehydroquinate synthase from Geobacillus thermodenitrificans (strain NG80-2).